A 558-amino-acid chain; its full sequence is Phosphatidylserine lipase ABHD16A (558 aa).

Helical transmembrane passes span 60 to 80 (ILAL…FAFF) and 93 to 113 (VVPF…VACL). Topologically, residues 114 to 558 (RGIGRWTNPQ…AQHFQMPWHL (445 aa)) are cytoplasmic. The AB hydrolase-1 domain occupies 281 to 406 (LVICCEGNAG…ALVTRTVRQH (126 aa)). Catalysis depends on charge relay system residues Ser-355, Asp-430, and His-507.

This sequence belongs to the AB hydrolase superfamily. ABHD16 family.

The protein resides in the membrane. The catalysed reaction is 1-heptadecanoyl-2-(5Z,8Z,11Z,14Z-eicosatetraenoyl)-sn-glycero-3-phosphoserine + H2O = 1-heptadecanoyl-sn-glycero-3-phosphoserine + (5Z,8Z,11Z,14Z)-eicosatetraenoate + H(+). It catalyses the reaction 1-hexadecanoyl-2-(9Z-octadecenoyl)-sn-glycero-3-phospho-L-serine + H2O = 1-hexadecanoyl-sn-glycero-3-phospho-L-serine + (9Z)-octadecenoate + H(+). It carries out the reaction 1-octadecanoyl-2-(9Z,12Z-octadecadienoyl)-sn-glycero-3-phosphoserine + H2O = 1-octadecanoyl-sn-glycero-3-phosphoserine + (9Z,12Z)-octadecadienoate + H(+). The enzyme catalyses 1-heptadecanoyl-2-(5Z,8Z,11Z,14Z-eicosatetraenoyl)-sn-glycero-3-phosphocholine + H2O = 1-heptadecanoyl-sn-glycero-3-phosphocholine + (5Z,8Z,11Z,14Z)-eicosatetraenoate + H(+). The catalysed reaction is 1-hexadecanoyl-2-(9Z-octadecenoyl)-sn-glycero-3-phosphoglycerol + H2O = 1-hexadecanoyl-sn-glycero-3-phosphoglycerol + (9Z)-octadecenoate + H(+). It catalyses the reaction 1-hexadecanoyl-2-(9Z-octadecenoyl)-sn-glycero-3-phospho-(1D-myo-inositol) + H2O = 1-hexadecanoyl-sn-glycero-3-phospho-(1D-myo-inositol) + (9Z)-octadecenoate + H(+). It carries out the reaction 1-heptadecanoyl-2-(5Z,8Z,11Z,14Z-eicosatetraenoyl)-sn-glycero-3-phosphoethanolamine + H2O = 1-heptadecanoyl-sn-glycero-3-phosphoethanolamine + (5Z,8Z,11Z,14Z)-eicosatetraenoate + H(+). The enzyme catalyses 1-hexadecanoyl-2-(9Z-octadecenoyl)-sn-glycero-3-phospho-(1'-sn-glycerol) + H2O = 1-hexadecanoyl-sn-glycero-3-phospho-(1'-sn-glycerol) + (9Z)-octadecenoate + H(+). The catalysed reaction is Hydrolyzes glycerol monoesters of long-chain fatty acids.. It catalyses the reaction 1-tetradecanoylglycerol + H2O = tetradecanoate + glycerol + H(+). It carries out the reaction 2-hexadecanoylglycerol + H2O = glycerol + hexadecanoate + H(+). The enzyme catalyses 1-(9Z-octadecenoyl)-glycerol + H2O = glycerol + (9Z)-octadecenoate + H(+). The catalysed reaction is 2-(9Z-octadecenoyl)-glycerol + H2O = glycerol + (9Z)-octadecenoate + H(+). It catalyses the reaction 2-(9Z,12Z-octadecadienoyl)-glycerol + H2O = (9Z,12Z)-octadecadienoate + glycerol + H(+). It carries out the reaction 1-(5Z,8Z,11Z,14Z-eicosatetraenoyl)-glycerol + H2O = glycerol + (5Z,8Z,11Z,14Z)-eicosatetraenoate + H(+). The enzyme catalyses 2-(5Z,8Z,11Z,14Z-eicosatetraenoyl)-glycerol + H2O = glycerol + (5Z,8Z,11Z,14Z)-eicosatetraenoate + H(+). The catalysed reaction is prostaglandin D2-1-glycerol ester + H2O = prostaglandin D2 + glycerol + H(+). It catalyses the reaction 2-glyceryl-15-deoxy-Delta(12,14)-prostaglandin J2 + H2O = 15-deoxy-Delta(12,14)-prostaglandin J2 + glycerol + H(+). It carries out the reaction 1-(9Z,12Z-octadecadienoyl)-glycerol + H2O = (9Z,12Z)-octadecadienoate + glycerol + H(+). With respect to regulation, specifically inhibited by alpha-alkylidene-beta-lactone KC01 ((Z)-6-(2-Oxo-4-tridecyloxetan-3-ylidene)hexanamide). Its function is as follows. Phosphatidylserine (PS) lipase that mediates the hydrolysis of phosphatidylserine to generate lysophosphatidylserine (LPS). LPS constitutes a class of signaling lipids that regulates immunological and neurological processes. Has no activity towards diacylglycerol, triacylglycerol or lysophosphatidylserine lipase. Also has monoacylglycerol lipase activity, with preference for 1-(9Z,12Z-octadecadienoyl)-glycerol (1-LG) and 2-glyceryl-15-deoxy-Delta(12,14)-prostaglandin J2 (15d-PGJ(2)-G). In Mus musculus (Mouse), this protein is Phosphatidylserine lipase ABHD16A.